The sequence spans 199 residues: Recombination protein RecR (199 aa).

The segment at 56–71 adopts a C4-type zinc-finger fold; the sequence is CRSCFNVAQSELCRIC. The region spanning 79–174 is the Toprim domain; sequence SSICVVEEPK…KVTRLASGLP (96 aa).

This sequence belongs to the RecR family.

May play a role in DNA repair. It seems to be involved in an RecBC-independent recombinational process of DNA repair. It may act with RecF and RecO. In Frankia casuarinae (strain DSM 45818 / CECT 9043 / HFP020203 / CcI3), this protein is Recombination protein RecR.